A 1047-amino-acid polypeptide reads, in one-letter code: Atrial natriuretic peptide receptor 2 (1047 aa).

Positions 1-16 (MALPSLLLVVAALAGG) are cleaved as a signal peptide. The Extracellular portion of the chain corresponds to 17–458 (VRPPGARNLT…DKTPLSTLAI (442 aa)). Residues Asn-24 and Asn-35 are each glycosylated (N-linked (GlcNAc...) asparagine). A disulfide bridge connects residues Cys-75 and Cys-101. N-linked (GlcNAc...) asparagine glycosylation is found at Asn-161, Asn-195, Asn-244, Asn-277, and Asn-349. The helical transmembrane segment at 459-478 (VALGTGVTFIMFGVSSFLIF) threads the bilayer. Residues 479 to 1047 (RKLMLEKELA…GEQKGPPGLL (569 aa)) lie on the Cytoplasmic side of the membrane. Position 513 is a phosphoserine (Ser-513). One can recognise a Protein kinase domain in the interval 513-786 (SRLTLSLRGS…PDFGQIKGFI (274 aa)). Thr-516 carries the post-translational modification Phosphothreonine. 4 positions are modified to phosphoserine: Ser-518, Ser-522, Ser-523, and Ser-526. Thr-529 is modified (phosphothreonine). The 131-residue stretch at 861–991 (TIYFSDIVGF…DTVNTASRME (131 aa)) folds into the Guanylate cyclase domain.

Belongs to the adenylyl cyclase class-4/guanylyl cyclase family. Phosphorylated. Phosphorylation of the protein kinase-like domain is required for full activation by CNP. In terms of processing, glycosylated. As to expression, widely expressed. Expressed in the columnar proliferating and prehypertrophic chondrocyte layers of the tibia.

The protein localises to the cell membrane. It catalyses the reaction GTP = 3',5'-cyclic GMP + diphosphate. In terms of biological role, receptor for the C-type natriuretic peptide NPPC/CNP hormone. Has guanylate cyclase activity upon binding of its ligand. May play a role in the regulation of skeletal growth. The sequence is that of Atrial natriuretic peptide receptor 2 (Npr2) from Mus musculus (Mouse).